Reading from the N-terminus, the 851-residue chain is DNA mismatch repair protein MutS (851 aa).

Residue 614-621 coordinates ATP; it reads GPNMGGKS.

This sequence belongs to the DNA mismatch repair MutS family.

Its function is as follows. This protein is involved in the repair of mismatches in DNA. It is possible that it carries out the mismatch recognition step. This protein has a weak ATPase activity. In Yersinia pseudotuberculosis serotype O:1b (strain IP 31758), this protein is DNA mismatch repair protein MutS.